Here is a 317-residue protein sequence, read N- to C-terminus: Putative S-adenosyl-L-methionine-dependent methyltransferase MSMEG_0093 (317 aa).

S-adenosyl-L-methionine is bound by residues aspartate 134 and 163–164 (DL).

It belongs to the UPF0677 family.

Its function is as follows. Exhibits S-adenosyl-L-methionine-dependent methyltransferase activity. The protein is Putative S-adenosyl-L-methionine-dependent methyltransferase MSMEG_0093 of Mycolicibacterium smegmatis (strain ATCC 700084 / mc(2)155) (Mycobacterium smegmatis).